A 170-amino-acid polypeptide reads, in one-letter code: Protein SprT (170 aa).

The region spanning Arg-19 to Arg-163 is the SprT-like domain. Zn(2+) is bound at residue His-78. Residue Glu-79 is part of the active site. His-82 is a binding site for Zn(2+).

The protein belongs to the SprT family. Requires Zn(2+) as cofactor.

Its subcellular location is the cytoplasm. This chain is Protein SprT, found in Erwinia tasmaniensis (strain DSM 17950 / CFBP 7177 / CIP 109463 / NCPPB 4357 / Et1/99).